The sequence spans 419 residues: [Butirosin acyl-carrier protein]--L-glutamate ligase (419 aa).

In terms of domain architecture, ATP-grasp spans 144–345 (RRLMERNGFN…FVESRVLVFN (202 aa)). Residue 174-231 (ISAGFSKCVLKVPYGSSGKGLKVIDNERNFRFLLNYIQNRQTNVDLLLEGWHPHRLSL) participates in ATP binding. Mg(2+) contacts are provided by D298, E312, and N314. Mn(2+) contacts are provided by D298, E312, and N314.

Monomer. Mg(2+) is required as a cofactor. The cofactor is Mn(2+).

It catalyses the reaction holo-[BtrI ACP] + L-glutamate + ATP = gamma-L-glutamyl-[BtrI ACP] + ADP + phosphate. It carries out the reaction 4-aminobutanoyl-[BtrI ACP] + L-glutamate + ATP = 4-(gamma-L-glutamylamino)butanoyl-[BtrI ACP] + ADP + phosphate + H(+). It participates in antibiotic biosynthesis; butirosin biosynthesis. In terms of biological role, ATP-dependent ligase that catalyzes 2 steps in the biosynthesis of the side chain of the aminoglycoside antibiotics in the biosynthetic pathway of butirosin. Mediates the addition of one molecule of L-glutamate to a dedicated acyl-carrier protein. Following decarboxylation of the product by BtrK, adds a second L-glutamate molecule. This chain is [Butirosin acyl-carrier protein]--L-glutamate ligase (btrJ), found in Niallia circulans (Bacillus circulans).